The chain runs to 267 residues: Glutamate 5-kinase (267 aa).

Residue K14 coordinates ATP. The substrate site is built by S54, D141, and N157. ATP contacts are provided by residues 177 to 178 (SD) and 219 to 225 (TGGMMSK).

It belongs to the glutamate 5-kinase family.

Its subcellular location is the cytoplasm. The enzyme catalyses L-glutamate + ATP = L-glutamyl 5-phosphate + ADP. It participates in amino-acid biosynthesis; L-proline biosynthesis; L-glutamate 5-semialdehyde from L-glutamate: step 1/2. Functionally, catalyzes the transfer of a phosphate group to glutamate to form L-glutamate 5-phosphate. The sequence is that of Glutamate 5-kinase from Streptococcus thermophilus (strain CNRZ 1066).